The following is a 218-amino-acid chain: 3,4-dihydroxy-2-butanone 4-phosphate synthase (218 aa).

D-ribulose 5-phosphate contacts are provided by residues 37–38 (RE), Asp42, 150–154 (RSGHT), and Glu174. Glu38 serves as a coordination point for Mg(2+). His153 is a binding site for Mg(2+).

It belongs to the DHBP synthase family. As to quaternary structure, homodimer. The cofactor is Mg(2+). It depends on Mn(2+) as a cofactor.

The enzyme catalyses D-ribulose 5-phosphate = (2S)-2-hydroxy-3-oxobutyl phosphate + formate + H(+). It functions in the pathway cofactor biosynthesis; riboflavin biosynthesis; 2-hydroxy-3-oxobutyl phosphate from D-ribulose 5-phosphate: step 1/1. Its function is as follows. Catalyzes the conversion of D-ribulose 5-phosphate to formate and 3,4-dihydroxy-2-butanone 4-phosphate. The chain is 3,4-dihydroxy-2-butanone 4-phosphate synthase from Hamiltonella defensa subsp. Acyrthosiphon pisum (strain 5AT).